A 687-amino-acid chain; its full sequence is Polyphosphate kinase (687 aa).

Asn-45 provides a ligand contact to ATP. Residues Arg-373 and Arg-403 each coordinate Mg(2+). His-433 acts as the Phosphohistidine intermediate in catalysis. Tyr-466, Arg-562, and His-590 together coordinate ATP. The region spanning 585–615 (DRFLEHDRVYVFENKGDKLVYLSSADWMTRN) is the PLD phosphodiesterase domain.

This sequence belongs to the polyphosphate kinase 1 (PPK1) family. It depends on Mg(2+) as a cofactor. Post-translationally, an intermediate of this reaction is the autophosphorylated ppk in which a phosphate is covalently linked to a histidine residue through a N-P bond.

It catalyses the reaction [phosphate](n) + ATP = [phosphate](n+1) + ADP. Functionally, catalyzes the reversible transfer of the terminal phosphate of ATP to form a long-chain polyphosphate (polyP). The chain is Polyphosphate kinase from Yersinia pestis.